We begin with the raw amino-acid sequence, 560 residues long: Dihydroxy-acid dehydratase (560 aa).

Cysteine 52 serves as a coordination point for [2Fe-2S] cluster. Residue aspartate 84 participates in Mg(2+) binding. Cysteine 125 contacts [2Fe-2S] cluster. Residues aspartate 126 and lysine 127 each coordinate Mg(2+). Lysine 127 carries the N6-carboxylysine modification. Cysteine 197 serves as a coordination point for [2Fe-2S] cluster. Glutamate 449 is a binding site for Mg(2+). Serine 475 (proton acceptor) is an active-site residue.

Belongs to the IlvD/Edd family. As to quaternary structure, homodimer. [2Fe-2S] cluster serves as cofactor. It depends on Mg(2+) as a cofactor.

The enzyme catalyses (2R)-2,3-dihydroxy-3-methylbutanoate = 3-methyl-2-oxobutanoate + H2O. It catalyses the reaction (2R,3R)-2,3-dihydroxy-3-methylpentanoate = (S)-3-methyl-2-oxopentanoate + H2O. It participates in amino-acid biosynthesis; L-isoleucine biosynthesis; L-isoleucine from 2-oxobutanoate: step 3/4. It functions in the pathway amino-acid biosynthesis; L-valine biosynthesis; L-valine from pyruvate: step 3/4. Functions in the biosynthesis of branched-chain amino acids. Catalyzes the dehydration of (2R,3R)-2,3-dihydroxy-3-methylpentanoate (2,3-dihydroxy-3-methylvalerate) into 2-oxo-3-methylpentanoate (2-oxo-3-methylvalerate) and of (2R)-2,3-dihydroxy-3-methylbutanoate (2,3-dihydroxyisovalerate) into 2-oxo-3-methylbutanoate (2-oxoisovalerate), the penultimate precursor to L-isoleucine and L-valine, respectively. The sequence is that of Dihydroxy-acid dehydratase from Sulfurisphaera tokodaii (strain DSM 16993 / JCM 10545 / NBRC 100140 / 7) (Sulfolobus tokodaii).